A 151-amino-acid chain; its full sequence is Superoxide dismutase [Cu-Zn] (151 aa).

Cys6 is lipidated: S-palmitoyl cysteine. Cu cation-binding residues include His45, His47, and His62. A disulfide bridge connects residues Cys56 and Cys144. His62, His70, His79, and Asp82 together coordinate Zn(2+). His118 lines the Cu cation pocket.

This sequence belongs to the Cu-Zn superoxide dismutase family. Homodimer. The cofactor is Cu cation. Requires Zn(2+) as cofactor.

It is found in the cytoplasm. The protein resides in the nucleus. It carries out the reaction 2 superoxide + 2 H(+) = H2O2 + O2. Its function is as follows. Destroys radicals which are normally produced within the cells and which are toxic to biological systems. The protein is Superoxide dismutase [Cu-Zn] (sod1) of Xenopus tropicalis (Western clawed frog).